Reading from the N-terminus, the 929-residue chain is Protocadherin gamma-B7 (929 aa).

A signal peptide spans M1–C30. Cadherin domains lie at E31–F133, R134–F242, S243–I347, I348–F452, G453–V562, and D570–F675. The Extracellular portion of the chain corresponds to E31–Y691. Residues N419 and N545 are each glycosylated (N-linked (GlcNAc...) asparagine). A helical membrane pass occupies residues L692–A712. Residues L713 to K929 lie on the Cytoplasmic side of the membrane. Disordered stretches follow at residues Q806–N838 and A899–K929. The span at A807–N838 shows a compositional bias: polar residues. A compositionally biased stretch (basic residues) spans N919 to K929.

It is found in the cell membrane. Its function is as follows. Potential calcium-dependent cell-adhesion protein. May be involved in the establishment and maintenance of specific neuronal connections in the brain. The sequence is that of Protocadherin gamma-B7 (PCDHGB7) from Homo sapiens (Human).